We begin with the raw amino-acid sequence, 562 residues long: Ikaros family zinc finger protein (562 aa).

C2H2-type zinc fingers lie at residues 45–67 (IKCE…IRSH), 73–95 (FKCH…YKIH), and 101–123 (FQCP…MRIH). Residues 129–152 (YRCSYCARSYKSRQSMKEHEYQCP) form a C2H2-type 4; degenerate zinc finger. Disordered regions lie at residues 178–210 (NPLA…PPYP), 293–342 (QNQQ…VKPT), 361–404 (QLED…KEDD), and 451–473 (DESK…STQD). Positions 307 to 326 (PSLSEATPSSHSSHSSAEDS) are enriched in low complexity. Over residues 327–336 (GQVNKFSPTE) the composition is skewed to polar residues. A compositionally biased stretch (basic and acidic residues) spans 369–383 (DSRKRPHSFESEPTP). Positions 456–471 (EISSVDSRSPLDQSST) are enriched in polar residues. 2 consecutive C2H2-type zinc fingers follow at residues 494-516 (WECK…MGVH) and 522-546 (LVCN…HHQH).

It belongs to the Ikaros C2H2-type zinc-finger protein family. As to expression, expression is strongest in the anterior Fol cells of the oikoplastic epithelium.

The protein localises to the nucleus. The sequence is that of Ikaros family zinc finger protein from Oikopleura dioica (Tunicate).